The chain runs to 124 residues: Small ribosomal subunit protein uS12 (124 aa).

2 disordered regions span residues 9–32 (RKGRRDKVAKTKTAALKGSPQRRG) and 105–124 (QGVKNRKQARSRYGAKKEKS). Residues 108–118 (KNRKQARSRYG) show a composition bias toward basic residues.

The protein belongs to the universal ribosomal protein uS12 family. As to quaternary structure, part of the 30S ribosomal subunit. Contacts proteins S8 and S17. May interact with IF1 in the 30S initiation complex.

Functionally, with S4 and S5 plays an important role in translational accuracy. In terms of biological role, interacts with and stabilizes bases of the 16S rRNA that are involved in tRNA selection in the A site and with the mRNA backbone. Located at the interface of the 30S and 50S subunits, it traverses the body of the 30S subunit contacting proteins on the other side and probably holding the rRNA structure together. The combined cluster of proteins S8, S12 and S17 appears to hold together the shoulder and platform of the 30S subunit. This chain is Small ribosomal subunit protein uS12, found in Nocardia farcinica (strain IFM 10152).